Consider the following 268-residue polypeptide: Speedy protein E4A (268 aa).

Disordered regions lie at residues 1–26 and 43–97; these read MGEG…LGFV and LCSE…LDSE. Residues 43 to 52 show a composition bias toward polar residues; the sequence is LCSEEQSPQP. A speedy/Ringo box; Required for CDK-binding region spans residues 134 to 265; that stretch reads PEHHKVFTKL…DLWVWARDRT (132 aa).

This sequence belongs to the Speedy/Ringo family. In terms of assembly, interacts with CDK1. Does not interact with CDK2 in vivo. In terms of tissue distribution, testis-specific.

It is found in the nucleus. In terms of biological role, promotes progression through the cell cycle via binding and activation of CDK1. The protein is Speedy protein E4A of Mus musculus (Mouse).